The chain runs to 957 residues: Glycine dehydrogenase (decarboxylating) (957 aa).

Lysine 708 bears the N6-(pyridoxal phosphate)lysine mark.

The protein belongs to the GcvP family. In terms of assembly, the glycine cleavage system is composed of four proteins: P, T, L and H. The cofactor is pyridoxal 5'-phosphate.

The enzyme catalyses N(6)-[(R)-lipoyl]-L-lysyl-[glycine-cleavage complex H protein] + glycine + H(+) = N(6)-[(R)-S(8)-aminomethyldihydrolipoyl]-L-lysyl-[glycine-cleavage complex H protein] + CO2. Its function is as follows. The glycine cleavage system catalyzes the degradation of glycine. The P protein binds the alpha-amino group of glycine through its pyridoxal phosphate cofactor; CO(2) is released and the remaining methylamine moiety is then transferred to the lipoamide cofactor of the H protein. The polypeptide is Glycine dehydrogenase (decarboxylating) (Salmonella agona (strain SL483)).